The chain runs to 253 residues: Ribonuclease HII (253 aa).

The RNase H type-2 domain occupies 70-253 (NLIAGIDEVG…KSFEPIKSML (184 aa)). The a divalent metal cation site is built by Asp76, Glu77, and Asp168.

The protein belongs to the RNase HII family. Mn(2+) is required as a cofactor. Mg(2+) serves as cofactor.

Its subcellular location is the cytoplasm. It catalyses the reaction Endonucleolytic cleavage to 5'-phosphomonoester.. Endonuclease that specifically degrades the RNA of RNA-DNA hybrids. The chain is Ribonuclease HII from Streptococcus agalactiae serotype Ia (strain ATCC 27591 / A909 / CDC SS700).